The following is a 103-amino-acid chain: Large ribosomal subunit protein bL21 (103 aa).

It belongs to the bacterial ribosomal protein bL21 family. As to quaternary structure, part of the 50S ribosomal subunit. Contacts protein L20.

Its function is as follows. This protein binds to 23S rRNA in the presence of protein L20. In Nautilia profundicola (strain ATCC BAA-1463 / DSM 18972 / AmH), this protein is Large ribosomal subunit protein bL21.